Consider the following 111-residue polypeptide: Probable 4-amino-4-deoxy-L-arabinose-phosphoundecaprenol flippase subunit ArnE (111 aa).

Transmembrane regions (helical) follow at residues 38 to 58 (LWLG…LLVL), 61 to 81 (LPVG…TLAA), and 91 to 111 (PRHW…GSAA). The region spanning 40–109 (LGLALICMGA…IISGIIILGS (70 aa)) is the EamA domain.

This sequence belongs to the ArnE family. Heterodimer of ArnE and ArnF.

Its subcellular location is the cell inner membrane. The protein operates within bacterial outer membrane biogenesis; lipopolysaccharide biosynthesis. In terms of biological role, translocates 4-amino-4-deoxy-L-arabinose-phosphoundecaprenol (alpha-L-Ara4N-phosphoundecaprenol) from the cytoplasmic to the periplasmic side of the inner membrane. The sequence is that of Probable 4-amino-4-deoxy-L-arabinose-phosphoundecaprenol flippase subunit ArnE from Salmonella paratyphi B (strain ATCC BAA-1250 / SPB7).